Consider the following 627-residue polypeptide: DNA mismatch repair protein MutL (627 aa).

Basic and acidic residues predominate over residues 354–364 (DEKPPEKKVPE). The tract at residues 354-374 (DEKPPEKKVPEKSTAPSYSPM) is disordered.

This sequence belongs to the DNA mismatch repair MutL/HexB family.

Its function is as follows. This protein is involved in the repair of mismatches in DNA. It is required for dam-dependent methyl-directed DNA mismatch repair. May act as a 'molecular matchmaker', a protein that promotes the formation of a stable complex between two or more DNA-binding proteins in an ATP-dependent manner without itself being part of a final effector complex. Overexpression of mutSL partially suppresses the high spontaneous mutation frequency of a ytkD/mutM/mutY triple disruption which lacks the system required to prevent damage by oxidized guanine (8-oxo-dGTP). This suggests that MutSL also functions to repair mismatches due to oxidative stress in both growing and stationary phase cells. This Bacillus subtilis (strain 168) protein is DNA mismatch repair protein MutL.